Consider the following 278-residue polypeptide: Large ribosomal subunit protein uL24m (278 aa).

The region spanning 109–142 (FFPGDLVQVMVGKDKGRQGLVLTTSRDSSDVIVD) is the KOW domain.

This sequence belongs to the universal ribosomal protein uL24 family.

It is found in the mitochondrion. The sequence is that of Large ribosomal subunit protein uL24m (mrpl-24) from Caenorhabditis elegans.